Consider the following 276-residue polypeptide: RNA-binding protein pno-1 (276 aa).

2 disordered regions span residues 1–30 and 62–101; these read MATSSSAFDDEFPMEEGMPELLDDEDVPST and DVVMEDISQPDDSTTDSPDADAEQKPTKRSKGSKGESRVV. Acidic residues predominate over residues 8–27; it reads FDDEFPMEEGMPELLDDEDV. One can recognise a KH domain in the interval 197-249; the sequence is GDHVSRAIGRIAGKDGRTKLVIENTTKTRIVVANTKIHILGAYQNLKLARNAV.

This sequence belongs to the PNO1 family. As to quaternary structure, part of the small subunit (SSU) processome, composed of more than 70 proteins and the RNA chaperone small nucleolar RNA (snoRNA) U3.

The protein resides in the nucleus. It localises to the nucleolus. Its function is as follows. Part of the small subunit (SSU) processome, first precursor of the small eukaryotic ribosomal subunit. During the assembly of the SSU processome in the nucleolus, many ribosome biogenesis factors, an RNA chaperone and ribosomal proteins associate with the nascent pre-rRNA and work in concert to generate RNA folding, modifications, rearrangements and cleavage as well as targeted degradation of pre-ribosomal RNA by the RNA exosome. Positively regulates dimethylation of two adjacent adenosines in the loop of a conserved hairpin near the 3'-end of 18S rRNA. In Caenorhabditis briggsae, this protein is RNA-binding protein pno-1.